Consider the following 222-residue polypeptide: Chymotrypsin-1 (222 aa).

One can recognise a Peptidase S1 domain in the interval 1-221 (IVGGKDAPVG…FVSWINANLK (221 aa)). Cys-26 and Cys-42 are joined by a disulfide. Active-site charge relay system residues include His-41 and Asp-87. 2 disulfide bridges follow: Cys-151–Cys-164 and Cys-174–Cys-198. Ser-178 (charge relay system) is an active-site residue.

Belongs to the peptidase S1 family.

It is found in the secreted. It localises to the extracellular space. It catalyses the reaction Preferential cleavage: Tyr-|-Xaa, Trp-|-Xaa, Phe-|-Xaa, Leu-|-Xaa.. The protein is Chymotrypsin-1 of Solenopsis invicta (Red imported fire ant).